The primary structure comprises 723 residues: Fatty acid oxidation complex subunit alpha (723 aa).

An enoyl-CoA hydratase/isomerase region spans residues 1 to 189 (MIYQAETLQV…KIGLLDAVVD (189 aa)). Asp296 contacts substrate. A 3-hydroxyacyl-CoA dehydrogenase region spans residues 311–723 (NKETQRAAVL…FYGAQQQGSI (413 aa)). NAD(+) contacts are provided by residues Met325, Asp344, 401-403 (VVE), Lys408, and Ser430. His451 serves as the catalytic For 3-hydroxyacyl-CoA dehydrogenase activity. Asn454 is an NAD(+) binding site. Residues Asn501 and Tyr661 each coordinate substrate.

This sequence in the N-terminal section; belongs to the enoyl-CoA hydratase/isomerase family. The protein in the C-terminal section; belongs to the 3-hydroxyacyl-CoA dehydrogenase family. As to quaternary structure, heterotetramer of two alpha chains (FadB) and two beta chains (FadA).

It carries out the reaction a (3S)-3-hydroxyacyl-CoA + NAD(+) = a 3-oxoacyl-CoA + NADH + H(+). The enzyme catalyses a (3S)-3-hydroxyacyl-CoA = a (2E)-enoyl-CoA + H2O. The catalysed reaction is a 4-saturated-(3S)-3-hydroxyacyl-CoA = a (3E)-enoyl-CoA + H2O. It catalyses the reaction (3S)-3-hydroxybutanoyl-CoA = (3R)-3-hydroxybutanoyl-CoA. It carries out the reaction a (3Z)-enoyl-CoA = a 4-saturated (2E)-enoyl-CoA. The enzyme catalyses a (3E)-enoyl-CoA = a 4-saturated (2E)-enoyl-CoA. Its pathway is lipid metabolism; fatty acid beta-oxidation. Its function is as follows. Involved in the aerobic and anaerobic degradation of long-chain fatty acids via beta-oxidation cycle. Catalyzes the formation of 3-oxoacyl-CoA from enoyl-CoA via L-3-hydroxyacyl-CoA. It can also use D-3-hydroxyacyl-CoA and cis-3-enoyl-CoA as substrate. This Vibrio vulnificus (strain YJ016) protein is Fatty acid oxidation complex subunit alpha.